The chain runs to 433 residues: Enolase (433 aa).

Position 1 is an N-acetylserine (S1). The (2R)-2-phosphoglycerate site is built by S36 and H157. Residue E209 is the Proton donor of the active site. Mn(2+) contacts are provided by D244, E294, and D319. (2R)-2-phosphoglycerate-binding residues include K344, R373, and S374. Catalysis depends on K344, which acts as the Proton acceptor.

This sequence belongs to the enolase family. Homodimer. Mg(2+) serves as cofactor.

Its subcellular location is the cytoplasm. The enzyme catalyses (2R)-2-phosphoglycerate = phosphoenolpyruvate + H2O. Its pathway is carbohydrate degradation; glycolysis; pyruvate from D-glyceraldehyde 3-phosphate: step 4/5. With respect to regulation, inhibited by 2-phosphoglycolic acid. The polypeptide is Enolase (Homarus gammarus (European lobster)).